A 93-amino-acid polypeptide reads, in one-letter code: Protein F-93 (93 aa).

Homodimer.

In terms of biological role, probable transcription factor that recognizes a (pseudo-)palindromic DNA target sequence. This Saccharolobus solfataricus (Sulfolobus solfataricus) protein is Protein F-93.